The sequence spans 289 residues: ATP synthase gamma chain (289 aa).

The protein belongs to the ATPase gamma chain family. F-type ATPases have 2 components, CF(1) - the catalytic core - and CF(0) - the membrane proton channel. CF(1) has five subunits: alpha(3), beta(3), gamma(1), delta(1), epsilon(1). CF(0) has three main subunits: a, b and c.

Its subcellular location is the cell membrane. In terms of biological role, produces ATP from ADP in the presence of a proton gradient across the membrane. The gamma chain is believed to be important in regulating ATPase activity and the flow of protons through the CF(0) complex. The protein is ATP synthase gamma chain of Buchnera aphidicola subsp. Melaphis rhois.